The chain runs to 154 residues: uncharacterized protein (154 aa).

Disordered stretches follow at residues 23-63 and 79-154; these read ERVG…VVLK and IKAA…DENE. Acidic residues predominate over residues 43-56; sequence PDEDGDHSDKEDEQ. A Phosphoserine modification is found at serine 50. Lysine 108 carries the N6-acetyllysine modification. The residue at position 146 (serine 146) is a Phosphoserine.

This is an uncharacterized protein from Homo sapiens (Human).